A 1116-amino-acid polypeptide reads, in one-letter code: DUB-associated factor 1 (1116 aa).

WD repeat units lie at residues 21-62 (AHIL…NEPE), 91-132 (KNSD…DHDD), 160-200 (VHDG…EKMA), 219-262 (SMSP…EVIR), 266-305 (AHRT…DQTT), 387-426 (KKYG…FSVN), and 428-466 (GGFA…LLNT). Positions 578 to 600 (LDTGYNSESKKNNKDKKRKSTFK) are disordered. S668 carries the post-translational modification Phosphoserine. T693 bears the Phosphothreonine mark. The segment covering 747–776 (ISSQDLPSNNTHNKLRSSENSRANSTSTLE) has biased composition (polar residues). Disordered regions lie at residues 747 to 784 (ISSQ…KKPE) and 963 to 994 (FISA…PSTQ). Residues 967–987 (SDTTESSGNDSSDSSLGNGNE) show a composition bias toward low complexity.

In terms of assembly, interacts (via its WD repeats) with ubiquitin.

It is found in the cytoplasm. In terms of biological role, ubiquitin-binding protein involved in the resistance to phenanthroline, sanguinarine, nordihydroguaiaretic acid (NDGA), isopropyl (N-3-chloro-phenyl)-carbamate (IPCPC) and guanosine 5'-O-(2-thiodiphosphate). This is DUB-associated factor 1 from Saccharomyces cerevisiae (strain ATCC 204508 / S288c) (Baker's yeast).